The following is a 114-amino-acid chain: Nucleoid-associated protein Cyan7425_0899 (114 aa).

The protein belongs to the YbaB/EbfC family. In terms of assembly, homodimer.

It localises to the cytoplasm. It is found in the nucleoid. Its function is as follows. Binds to DNA and alters its conformation. May be involved in regulation of gene expression, nucleoid organization and DNA protection. This chain is Nucleoid-associated protein Cyan7425_0899, found in Cyanothece sp. (strain PCC 7425 / ATCC 29141).